A 344-amino-acid polypeptide reads, in one-letter code: Serpentine receptor class delta-3 (344 aa).

7 helical membrane passes run 21 to 41 (IIGY…IILI), 54 to 74 (MLHL…MLAL), 102 to 122 (FLHV…MISF), 142 to 162 (ICIL…SDVA), 203 to 223 (FSAI…IVFF), 259 to 279 (IVPI…FQVV), and 287 to 307 (MPFR…LYFV).

This sequence belongs to the nematode receptor-like protein srd family.

It localises to the membrane. This Caenorhabditis elegans protein is Serpentine receptor class delta-3 (srd-3).